The chain runs to 339 residues: Inositol 2-dehydrogenase (339 aa).

The protein belongs to the Gfo/Idh/MocA family. As to quaternary structure, homotetramer.

The enzyme catalyses myo-inositol + NAD(+) = scyllo-inosose + NADH + H(+). Its function is as follows. Involved in the oxidation of myo-inositol (MI) to 2-keto-myo-inositol (2KMI or 2-inosose). The sequence is that of Inositol 2-dehydrogenase from Leifsonia xyli subsp. xyli (strain CTCB07).